A 795-amino-acid chain; its full sequence is Phenylalanine--tRNA ligase beta subunit (795 aa).

The tRNA-binding domain occupies 39 to 148; sequence AGTFNGVVVG…LDAPIGTDLR (110 aa). The B5 domain maps to 401-476; that stretch reads PKVNTVQLRR…RIYGYNSIPN (76 aa). The Mg(2+) site is built by Asp454, Asp460, Glu463, and Glu464. Positions 701-794 constitute an FDX-ACB domain; that stretch reads SKFPANRRDL…VKQRFNAELR (94 aa).

Belongs to the phenylalanyl-tRNA synthetase beta subunit family. Type 1 subfamily. In terms of assembly, tetramer of two alpha and two beta subunits. It depends on Mg(2+) as a cofactor.

The protein resides in the cytoplasm. The catalysed reaction is tRNA(Phe) + L-phenylalanine + ATP = L-phenylalanyl-tRNA(Phe) + AMP + diphosphate + H(+). The sequence is that of Phenylalanine--tRNA ligase beta subunit (pheT) from Haemophilus influenzae (strain ATCC 51907 / DSM 11121 / KW20 / Rd).